A 246-amino-acid polypeptide reads, in one-letter code: Aquaporin AqpM (246 aa).

The Cytoplasmic segment spans residues 1 to 11; that stretch reads MVSLTKRCIAE. The helical transmembrane segment at 12–32 threads the bilayer; that stretch reads FIGTFFLVFFGAGAAAITLMI. At 33–45 the chain is on the extracellular side; it reads ASGGTAPNPFNIG. A helical membrane pass occupies residues 46–66; it reads IGLLGGLGDWVAIGLAFGFAI. At 67–69 the chain is on the cytoplasmic side; sequence AAS. A helical membrane pass occupies residues 70–90; it reads IYALGNISGCHINPAVTIGLW. Residues 82–84 carry the NPA 1 motif; the sequence is NPA. At 91–103 the chain is on the extracellular side; the sequence is SVKKFPGRDVVPY. The helical transmembrane segment at 104-124 threads the bilayer; it reads IIAQLLGAAFASFIFLQCAGI. Residues 125–145 are Cytoplasmic-facing; the sequence is TAATIGGLGATAPFPGIGYWQ. Residues 146 to 166 traverse the membrane as a helical segment; sequence AMLAETVGTFLLMITIMGIAV. Over 167 to 172 the chain is Extracellular; it reads DERAPK. Residues 173 to 193 traverse the membrane as a helical segment; it reads GFAGIIIGLTVAGIITTIGNI. Over 194–217 the chain is Cytoplasmic; it reads TGSSLNPARTFGPYLNDMVFAGTN. An NPA 2 motif is present at residues 199 to 201; that stretch reads NPA. The helical transmembrane segment at 218–238 threads the bilayer; sequence LWNYFPIYVIGPVVGAVLAAL. The Extracellular segment spans residues 239-246; it reads TYQYLTSE.

It belongs to the MIP/aquaporin (TC 1.A.8) family. As to quaternary structure, homotetramer.

The protein resides in the cell membrane. Channel that permits osmotically driven movement of water in both directions. It mediates rapid entry or exit of water in response to abrupt changes in osmolarity. Also exhibits a transient but reproducible increase in the initial glycerol flux. In Methanothermobacter thermautotrophicus (strain ATCC 29096 / DSM 1053 / JCM 10044 / NBRC 100330 / Delta H) (Methanobacterium thermoautotrophicum), this protein is Aquaporin AqpM (aqpM).